The following is a 535-amino-acid chain: Flavin-containing monooxygenase 1 (535 aa).

The residue at position 2 (alanine 2) is an N-acetylalanine. The Lumenal portion of the chain corresponds to 2 to 513 (AKRVAIVGAG…TRIVQESSSP (512 aa)). Residues 9 to 13 (GAGVS), glutamate 32, 40 to 41 (LW), and 61 to 62 (NS) each bind FAD. NADP(+) contacts are provided by residues 60–61 (SN) and 195–198 (SGTD). A helical membrane pass occupies residues 514 to 534 (FESLLKLFAVLALLVSVFLIF). Position 535 (leucine 535) is a topological domain, cytoplasmic.

The protein belongs to the FMO family. The cofactor is FAD. As to expression, liver.

It is found in the endoplasmic reticulum membrane. The enzyme catalyses hypotaurine + NADPH + O2 + H(+) = taurine + NADP(+) + H2O. The catalysed reaction is hypotaurine + NADH + O2 + H(+) = taurine + NAD(+) + H2O. It catalyses the reaction trimethylamine + NADPH + O2 = trimethylamine N-oxide + NADP(+) + H2O. It carries out the reaction N,N-dimethylaniline + NADPH + O2 + H(+) = N,N-dimethylaniline N-oxide + NADP(+) + H2O. Its function is as follows. Broad spectrum monooxygenase that catalyzes the oxygenation of a wide variety of nitrogen- and sulfur-containing compounds including xenobiotics. Catalyzes the S-oxygenation of hypotaurine to produce taurine, an organic osmolyte involved in cell volume regulation as well as a variety of cytoprotective and developmental processes. In vitro, catalyzes the N-oxygenation of trimethylamine (TMA) to produce trimethylamine N-oxide (TMAO) and could therefore participate to the detoxification of this compound that is generated by the action of gut microbiota from dietary precursors such as choline, choline containing compounds, betaine or L-carnitine. In Oryctolagus cuniculus (Rabbit), this protein is Flavin-containing monooxygenase 1 (FMO1).